Reading from the N-terminus, the 804-residue chain is Pentatricopeptide repeat-containing protein At4g35130, chloroplastic (804 aa).

Residues 1 to 19 constitute a chloroplast transit peptide; it reads MAATLLSQCYRIYNSDACK. PPR repeat units follow at residues 63–93, 94–128, 129–163, 164–194, 195–229, 230–264, 266–296, 297–332, 333–363, 364–394, 395–429, 430–464, 465–495, 496–530, 531–561, and 567–597; these read NDPA…MNKA, DAFL…GVKA, DTFT…GFVS, DVYV…MPER, DIVS…GFKP, DRFS…RIET, DVMV…MIQR, NIVA…GLQP, DVIT…GFLP, HMVL…MAEK, NVIS…SLVP, DSTT…RYWS, NTII…ILLK, DVVS…RVNP, NKST…MKRE, and GIEH…MPFV. The interval 602 to 677 is type E motif; the sequence is IWGSLLNASR…TSSRSTVEAK (76 aa). Positions 678–708 are type E(+) motif; the sequence is GKSHVFTNGDRSHVATNKIYEVLDVVSRMVG. Positions 710–804 are type DYW motif; that stretch reads EDIYVHCVSR…NGRCSCGNYW (95 aa).

The protein belongs to the PPR family. PCMP-H subfamily.

It is found in the plastid. The protein resides in the chloroplast. The chain is Pentatricopeptide repeat-containing protein At4g35130, chloroplastic (PCMP-H27) from Arabidopsis thaliana (Mouse-ear cress).